The sequence spans 286 residues: Shikimate dehydrogenase (NADP(+)) (286 aa).

Residues 21 to 23 (TLS) and T68 each bind shikimate. The active-site Proton acceptor is K72. D84 lines the NADP(+) pocket. Shikimate-binding residues include N93 and D108. NADP(+)-binding positions include 132-136 (GYGGA) and L226. Y228 serves as a coordination point for shikimate. NADP(+) is bound at residue G249.

This sequence belongs to the shikimate dehydrogenase family. Homodimer.

The enzyme catalyses shikimate + NADP(+) = 3-dehydroshikimate + NADPH + H(+). Its pathway is metabolic intermediate biosynthesis; chorismate biosynthesis; chorismate from D-erythrose 4-phosphate and phosphoenolpyruvate: step 4/7. In terms of biological role, involved in the biosynthesis of the chorismate, which leads to the biosynthesis of aromatic amino acids. Catalyzes the reversible NADPH linked reduction of 3-dehydroshikimate (DHSA) to yield shikimate (SA). This chain is Shikimate dehydrogenase (NADP(+)), found in Thermosynechococcus vestitus (strain NIES-2133 / IAM M-273 / BP-1).